Consider the following 298-residue polypeptide: Heme A synthase (298 aa).

Residues 1–6 (MHRSLK) are Cytoplasmic-facing. The chain crosses the membrane as a helical span at residues 7-27 (IFGTLTSIGMVIVLMQGALVT). Over 28 to 62 (KTESGEGCGATWPLCFGEVIPTNPAIETIIEYSHR) the chain is Extracellular. A disulfide bridge connects residues C35 and C42. The active site involves E58. H61 provides a ligand contact to heme o. The helical transmembrane segment at 63 to 83 (IVSGLLGAMVIILAIWAWRKL) threads the bilayer. At 84–92 (SHIRETKVM) the chain is on the cytoplasmic side. Residues 93-113 (AILAVLFIIFQGLLGAGAVVF) traverse the membrane as a helical segment. Residues 114–117 (GQSH) are Extracellular-facing. The chain crosses the membrane as a helical span at residues 118–138 (AILALHFGISAISLATVVLLT). Residue H123 participates in heme o binding. Residues 139-158 (TLAFEDGKPNPPALIVKKGY) are Cytoplasmic-facing. A helical transmembrane segment spans residues 159-179 (KGYILAVFAYCYAVIYTGAYV). Topologically, residues 180–209 (KHTQATLACGDFPLCNGQWIPMLSGPVGAH) are extracellular. C188 and C194 are joined by a disulfide. Residues 210-230 (FFHRVAGTLLLILLVVALIWT) traverse the membrane as a helical segment. Residue H212 coordinates heme b. At 231–244 (LRKYSHYRSLVWTH) the chain is on the cytoplasmic side. Residues 245 to 265 (ILCVILVLTQYATGISIVLTG) form a helical membrane-spanning segment. Residues 266–271 (NELFVA) are Extracellular-facing. The chain crosses the membrane as a helical span at residues 272 to 292 (MMHALIVSILFTTLCYIVMIL). Residue H274 coordinates heme b. The Cytoplasmic segment spans residues 293-298 (SRNKAV).

The protein belongs to the COX15/CtaA family. Type 1 subfamily. In terms of assembly, interacts with CtaB. Heme b serves as cofactor.

The protein localises to the cell membrane. It catalyses the reaction Fe(II)-heme o + 2 A + H2O = Fe(II)-heme a + 2 AH2. It functions in the pathway porphyrin-containing compound metabolism; heme A biosynthesis; heme A from heme O: step 1/1. Functionally, catalyzes the conversion of heme O to heme A by two successive hydroxylations of the methyl group at C8. The first hydroxylation forms heme I, the second hydroxylation results in an unstable dihydroxymethyl group, which spontaneously dehydrates, resulting in the formyl group of heme A. This is Heme A synthase from Halalkalibacterium halodurans (strain ATCC BAA-125 / DSM 18197 / FERM 7344 / JCM 9153 / C-125) (Bacillus halodurans).